We begin with the raw amino-acid sequence, 308 residues long: Acetaldehyde dehydrogenase (308 aa).

Position 10–13 (10–13) interacts with NAD(+); that stretch reads SGNI. Residue Cys128 is the Acyl-thioester intermediate of the active site. NAD(+)-binding positions include 159–167 and Asn285; that span reads SAGPGTRAN.

Belongs to the acetaldehyde dehydrogenase family.

It catalyses the reaction acetaldehyde + NAD(+) + CoA = acetyl-CoA + NADH + H(+). This chain is Acetaldehyde dehydrogenase, found in Salinispora tropica (strain ATCC BAA-916 / DSM 44818 / JCM 13857 / NBRC 105044 / CNB-440).